The chain runs to 140 residues: Nucleoside diphosphate kinase (140 aa).

ATP is bound by residues Lys-11, Phe-59, Arg-87, Thr-93, Arg-104, and Asn-114. Residue His-117 is the Pros-phosphohistidine intermediate of the active site.

This sequence belongs to the NDK family. As to quaternary structure, homotetramer. The cofactor is Mg(2+).

The protein localises to the cytoplasm. The catalysed reaction is a 2'-deoxyribonucleoside 5'-diphosphate + ATP = a 2'-deoxyribonucleoside 5'-triphosphate + ADP. It carries out the reaction a ribonucleoside 5'-diphosphate + ATP = a ribonucleoside 5'-triphosphate + ADP. In terms of biological role, major role in the synthesis of nucleoside triphosphates other than ATP. The ATP gamma phosphate is transferred to the NDP beta phosphate via a ping-pong mechanism, using a phosphorylated active-site intermediate. The protein is Nucleoside diphosphate kinase of Brucella melitensis biotype 1 (strain ATCC 23456 / CCUG 17765 / NCTC 10094 / 16M).